The sequence spans 314 residues: DNA-directed RNA polymerase subunit alpha (314 aa).

Positions 1–228 (MIEFEKPNIH…DHLSIFVNLT (228 aa)) are alpha N-terminal domain (alpha-NTD). Positions 245 to 314 (KEKMLEMTIE…DLGLSLRKED (70 aa)) are alpha C-terminal domain (alpha-CTD).

This sequence belongs to the RNA polymerase alpha chain family. Homodimer. The RNAP catalytic core consists of 2 alpha, 1 beta, 1 beta' and 1 omega subunit. When a sigma factor is associated with the core the holoenzyme is formed, which can initiate transcription.

The catalysed reaction is RNA(n) + a ribonucleoside 5'-triphosphate = RNA(n+1) + diphosphate. In terms of biological role, DNA-dependent RNA polymerase catalyzes the transcription of DNA into RNA using the four ribonucleoside triphosphates as substrates. The chain is DNA-directed RNA polymerase subunit alpha from Lactiplantibacillus plantarum (strain ATCC BAA-793 / NCIMB 8826 / WCFS1) (Lactobacillus plantarum).